The primary structure comprises 158 residues: CD-NTase/cGAS isopeptidase (158 aa).

E38 serves as the catalytic Proton donor/acceptor. Residues H100, H102, and D113 each contribute to the Zn(2+) site.

It belongs to the peptidase M67B family. Cap3 isopeptidase subfamily.

In terms of biological role, metalloprotease priming reversal component of a CBASS antivirus system. CBASS (cyclic oligonucleotide-based antiphage signaling system) provides immunity against bacteriophages. The CD-NTase protein synthesizes cyclic nucleotides in response to infection; these serve as specific second messenger signals. The signals activate a diverse range of effectors, leading to bacterial cell death and thus abortive phage infection. A type II-A(GA) CBASS system. Functionally, reverses the primed state of CdnA, the CD-NTase. The capV-cdnA-cap2-cap3 operon provides about 10(4)-fold protection in strain BWHPSA011 against infection by phage PaMx41. In P.aeruginosa strain PAO1 it confers protection against phages PaMx41 and JBD18 but not JBD67 (JBD18 and JBD67 do not replicate in BWHPSA011 / Pa011). When acb2 in JBD67 is deleted this CBASS operon then protects against JDB67 also. This CBASS system limits prophage induction of lysogenized JBD67 as well as viral lytic replication. This is CD-NTase/cGAS isopeptidase from Pseudomonas aeruginosa (strain BWHPSA011 / Pa011).